The following is a 151-amino-acid chain: MDYGTILEERTNPAVLMNAREQYMRQCARGDPSAASTFAFAHAMIGSKNKLDVKEGIVCLEKLLRDDEDRTSKRNYVYYLAVAHARIKQYDLALGYIDVLLDAEGDNQQAKTLKESIKSAMTHDGLIGAAIVGGGALALAGLVAIFSMSRK.

A helical membrane pass occupies residues 126-146; that stretch reads LIGAAIVGGGALALAGLVAIF.

This sequence belongs to the FIS1 family.

The protein localises to the mitochondrion outer membrane. It localises to the peroxisome membrane. Its subcellular location is the mitochondrion. Its function is as follows. Involved in the fragmentation of the mitochondrial network. Involved in perinuclear clustering of the mitochondrial network. May act, redundantly with fis-1, downstream of mitochondrial fission, before the fission products participate in mitochondrial homeostasis, mitophagy, or apoptosis. Plays a role in apoptosis by promoting mitochondrial elimination and cell-death execution, acting downstream of caspase ced-3, and perhaps independently of dynamin GTPase drp-1, caspase ced-9 and apoptosis-inducing factor AIFM/wah-1. This is FIS1-related protein fis-2 from Caenorhabditis elegans.